Reading from the N-terminus, the 587-residue chain is Glutamine--tRNA ligase (587 aa).

Residues 58–68 (PEPNGYLHIGH) carry the 'HIGH' region motif. ATP contacts are provided by residues 59–61 (EPN) and 65–71 (HIGHAKS). Positions 91 and 240 each coordinate L-glutamine. Residues T259 and 294 to 295 (RL) contribute to the ATP site. Positions 301–305 (VTSKR) match the 'KMSKS' region motif.

The protein belongs to the class-I aminoacyl-tRNA synthetase family. Monomer.

The protein localises to the cytoplasm. The enzyme catalyses tRNA(Gln) + L-glutamine + ATP = L-glutaminyl-tRNA(Gln) + AMP + diphosphate. This chain is Glutamine--tRNA ligase, found in Bordetella pertussis (strain Tohama I / ATCC BAA-589 / NCTC 13251).